Consider the following 411-residue polypeptide: cAMP-dependent protein kinase regulatory subunit (411 aa).

A disordered region spans residues 1–144; that stretch reads MAESAFPSAQ…SWTPPYHEKT (144 aa). The dimerization and phosphorylation stretch occupies residues 23–159; sequence AAFQKISEED…RLKTAVSSNF (137 aa). Residues 46-58 are compositionally biased toward low complexity; that stretch reads SANAAAASSSTGS. A compositionally biased stretch (acidic residues) spans 85-96; it reads EEDEEGADEFPP. A compositionally biased stretch (polar residues) spans 119–136; it reads TSVSAESLNPTSAGSDSW. Ser120 is subject to Phosphoserine. 3',5'-cyclic AMP is bound by residues 160–289, Glu238, Arg247, 292–411, Glu359, and Arg368; these read LFSH…FLEE and LLSS…PVPA.

It belongs to the cAMP-dependent kinase regulatory chain family. In terms of assembly, tetramer, composed of 2 regulatory (R) and 2 catalytic (C) subunits. In the presence of cAMP it dissociates into 2 active monomeric C subunits and an R dimer.

This is cAMP-dependent protein kinase regulatory subunit (pkaR) from Aspergillus niger.